We begin with the raw amino-acid sequence, 1058 residues long: MPKRTDIQKIMVIGSGPIIIGQAAEFDYAGTQACLSLKEEGYEVVLVNSNPATIMTDKEIADKVYIEPITLEFVTRILRKEGPDALLPTLGGQTGLNMAMELSKNGILDELGVELLGTKLSAIDQAEDRDLFKQLMEELEQPIPESEIVNTVEEAVAFAATIGYPVIVRPAFTLGGTGGGMCANEKELREITENGLKLSPVTQCLIERSIAGFKEIEYEVMRDSADNALVVCNMENFDPVGIHTGDSIVFAPAQTMSDYENQMLRDASLSIIRALKIEGGCNVQLALDPNSFKYYVIEVNPRVSRSSALASKATGYPIAKLAAKIAVGLTLDEVINPVTGSTYAMFEPALDYVVAKIPRFPFDKFEKGERRLGTQMKATGEVMAIGRNIEESLLKACRSLEIGVHHNEIPELAAVSDDALIEKVVKAQDDRLFYVSEAIRRGYTPEEIAELTKIDIFYLDKLLHIFEIEQELGAHPQDLEVLKTAKLNGFSDRKIAELWGTTDDKVRQLRLENKIVPVYKMVDTCAAEFDSETPYFYSTYGWENESIRSDKESVLVLGSGPIRIGQGVEFDYATVHSVKAIQAAGYEAIIMNSNPETVSTDFSVSDKLYFEPLTFEDVMNVIDLEQPKGVIVQFGGQTAINLAEPLAKAGVTILGTQVADLDRAEDRDLFEQALKELDIPQPPGQTATNEEEAALAARKIGFPVLVRPSYVLGGRAMEIVENEEDLRSYMRTAVKASPDHPVLVDSYIVGQECEVDAISDGKNVLIPGIMEHIERAGVHSGDSMAVYPPQTLSQKVQETIADYTKRLAIGLHCLGMMNIQFVIKDEKVYVIEVNPRASRTVPFLSKVTNIPMAQVATKLILGQSLSELGYQNGLYPESTRVHIKAPVFSFTKLAKVDSLLGPEMKSTGEVMGSDATLEKALYKAFEASYLHLPTFGNVVFTIADDAKEEALNLARRFQNIGYGILATEGTAAFFASHGLQAQPVGKIGDDDKDIPSFVRKGRIQAIINTVGTKRTADEDGEQIRRSAIEHGVPLFTALDTANAMLKVLESRSFVTEAI.

A carboxyphosphate synthetic domain region spans residues 1-401 (MPKRTDIQKI…SLLKACRSLE (401 aa)). Residues Arg129, Arg169, Gly175, Gly176, Arg208, Ile210, Glu215, Gly241, Ile242, His243, Gln284, and Glu298 each contribute to the ATP site. Residues 133 to 327 (KQLMEELEQP…IAKLAAKIAV (195 aa)) enclose the ATP-grasp 1 domain. Residues Gln284, Glu298, and Asn300 each contribute to the Mg(2+) site. Mn(2+)-binding residues include Gln284, Glu298, and Asn300. Positions 402–546 (IGVHHNEIPE…YSTYGWENES (145 aa)) are oligomerization domain. A carbamoyl phosphate synthetic domain region spans residues 547-929 (IRSDKESVLV…ALYKAFEASY (383 aa)). One can recognise an ATP-grasp 2 domain in the interval 671–861 (EQALKELDIP…MAQVATKLIL (191 aa)). ATP-binding residues include Arg707, Ser746, Ile748, Glu752, Gly777, Val778, His779, Ser780, Gln820, and Glu832. The Mg(2+) site is built by Gln820, Glu832, and Asn834. Residues Gln820, Glu832, and Asn834 each coordinate Mn(2+). One can recognise an MGS-like domain in the interval 930-1058 (LHLPTFGNVV…ESRSFVTEAI (129 aa)). Positions 930-1058 (LHLPTFGNVV…ESRSFVTEAI (129 aa)) are allosteric domain.

The protein belongs to the CarB family. In terms of assembly, composed of two chains; the small (or glutamine) chain promotes the hydrolysis of glutamine to ammonia, which is used by the large (or ammonia) chain to synthesize carbamoyl phosphate. Tetramer of heterodimers (alpha,beta)4. It depends on Mg(2+) as a cofactor. Mn(2+) is required as a cofactor.

It carries out the reaction hydrogencarbonate + L-glutamine + 2 ATP + H2O = carbamoyl phosphate + L-glutamate + 2 ADP + phosphate + 2 H(+). The catalysed reaction is hydrogencarbonate + NH4(+) + 2 ATP = carbamoyl phosphate + 2 ADP + phosphate + 2 H(+). Its pathway is amino-acid biosynthesis; L-arginine biosynthesis; carbamoyl phosphate from bicarbonate: step 1/1. It participates in pyrimidine metabolism; UMP biosynthesis via de novo pathway; (S)-dihydroorotate from bicarbonate: step 1/3. Large subunit of the glutamine-dependent carbamoyl phosphate synthetase (CPSase). CPSase catalyzes the formation of carbamoyl phosphate from the ammonia moiety of glutamine, carbonate, and phosphate donated by ATP, constituting the first step of 2 biosynthetic pathways, one leading to arginine and/or urea and the other to pyrimidine nucleotides. The large subunit (synthetase) binds the substrates ammonia (free or transferred from glutamine from the small subunit), hydrogencarbonate and ATP and carries out an ATP-coupled ligase reaction, activating hydrogencarbonate by forming carboxy phosphate which reacts with ammonia to form carbamoyl phosphate. The chain is Carbamoyl phosphate synthase large chain from Streptococcus pneumoniae serotype 2 (strain D39 / NCTC 7466).